The chain runs to 148 residues: 3-dehydroquinate dehydratase (148 aa).

Catalysis depends on Y23, which acts as the Proton acceptor. The substrate site is built by N75, H81, and D88. The active-site Proton donor is the H101. Substrate is bound by residues L102–S103 and R112.

The protein belongs to the type-II 3-dehydroquinase family. As to quaternary structure, homododecamer.

The catalysed reaction is 3-dehydroquinate = 3-dehydroshikimate + H2O. It participates in metabolic intermediate biosynthesis; chorismate biosynthesis; chorismate from D-erythrose 4-phosphate and phosphoenolpyruvate: step 3/7. In terms of biological role, catalyzes a trans-dehydration via an enolate intermediate. This chain is 3-dehydroquinate dehydratase, found in Xanthomonas oryzae pv. oryzae (strain MAFF 311018).